Reading from the N-terminus, the 230-residue chain is Probable caffeoyl-CoA O-methyltransferase 1 (230 aa).

S-adenosyl-L-methionine is bound by residues threonine 52, aspartate 74, 76–77 (GV), serine 82, aspartate 100, alanine 129, aspartate 151, aspartate 153, and tyrosine 160. Residue aspartate 151 participates in a divalent metal cation binding. A divalent metal cation contacts are provided by aspartate 177 and asparagine 178.

Belongs to the class I-like SAM-binding methyltransferase superfamily. Cation-dependent O-methyltransferase family. CCoAMT subfamily.

It catalyses the reaction (E)-caffeoyl-CoA + S-adenosyl-L-methionine = (E)-feruloyl-CoA + S-adenosyl-L-homocysteine + H(+). The sequence is that of Probable caffeoyl-CoA O-methyltransferase 1 (omt5) from Dictyostelium discoideum (Social amoeba).